The chain runs to 266 residues: MNKQFYSQQWKGVLTGFRPLTMVSPRFSMFLVPRRISCRFVHSTPKKDHTTLLSNDKLATFNVMSLKALKNECRTRGLKISGRKGELVDRILAFETSGSLSGGAAKQAARQLHISKSIRARNDIKPVDDVRMPDIAATEKSLETPEQEYIVHITPLSSSADKKPVTRLEKELSVEEVSANVPPAVSTTDHDKVIFQVDAPTDNIEVVDEEAELDADKRASENFGLHATKEELNSRDKTFLFGFAAALVGWWSLKFWDNKGKKRSLT.

The transit peptide at 1–40 (MNKQFYSQQWKGVLTGFRPLTMVSPRFSMFLVPRRISCRF) directs the protein to the mitochondrion. The 35-residue stretch at 61–95 (FNVMSLKALKNECRTRGLKISGRKGELVDRILAFE) folds into the SAP domain. Residues 238–256 (TFLFGFAAALVGWWSLKFW) traverse the membrane as a helical segment.

This sequence belongs to the AIM34 family.

Its subcellular location is the mitochondrion membrane. This chain is Altered inheritance of mitochondria protein 34, mitochondrial (AIM34), found in Lachancea thermotolerans (strain ATCC 56472 / CBS 6340 / NRRL Y-8284) (Yeast).